A 493-amino-acid chain; its full sequence is Dipeptide permease D (493 aa).

Transmembrane regions (helical) follow at residues 14–34, 49–69, 91–111, 138–158, 167–187, 212–232, 235–255, 267–287, 312–332, 344–364, 379–399, 413–433, and 458–478; these read VVAL…LLIL, ELFS…GYLA, LVLG…AIIV, GGFS…PIAC, WAMG…IFLC, NWGW…VLFW, WSVY…AKIY, LGLI…AQQG, MFQS…AWLV, IWGK…ILTL, LMVL…PVAM, VLTG…AGVI, and VFEQ…LIWL.

The protein belongs to the major facilitator superfamily. Proton-dependent oligopeptide transporter (POT/PTR) (TC 2.A.17) family. DtpD subfamily.

It localises to the cell inner membrane. In terms of biological role, probable proton-dependent permease that transports dipeptides. In Salmonella choleraesuis (strain SC-B67), this protein is Dipeptide permease D.